Consider the following 516-residue polypeptide: Ribose import ATP-binding protein RbsA (516 aa).

ABC transporter domains lie at 14 to 250 (LRLT…VGRA) and 261 to 504 (AKGA…AGIG). 46-53 (GENGAGKS) is an ATP binding site.

The protein belongs to the ABC transporter superfamily. Ribose importer (TC 3.A.1.2.1) family. In terms of assembly, the complex is composed of an ATP-binding protein (RbsA), two transmembrane proteins (RbsC) and a solute-binding protein (RbsB).

It localises to the cell inner membrane. The enzyme catalyses D-ribose(out) + ATP + H2O = D-ribose(in) + ADP + phosphate + H(+). Part of the ABC transporter complex RbsABC involved in ribose import. Responsible for energy coupling to the transport system. The chain is Ribose import ATP-binding protein RbsA from Jannaschia sp. (strain CCS1).